Reading from the N-terminus, the 311-residue chain is MADVLSVGVNLEAFSQAISAIQALRSSVSRVFDCLKDGMRNKETLEGREKAFIANFQDNLHSVNRDLNELERLSNLVGKPSENHPLHNSGLLSLDPVQDKTPLYSQLLQAYKWSNKLQYHAGLASGLLNQQSLKRSANQMGVSAKRRPKAQPTTLVLPPQYVDDVISRIDRMFPEMSIHLSRPNGTSAMLLVTLGKVLKVIVVMRSLFIDRTIVKGYNESVYTEDGKLDIWSKSSYQVFQKVTDHATTALLHYQLPQMPDVVVRSFMTWLRSYIKLFQAPCQRCGKFLQDGLPPTWRDFRTLEAFHDTCRQ.

Residue S132 is modified to Phosphoserine. N6-methyllysine is present on K134.

Belongs to the Mediator complex subunit 27 family. In terms of assembly, component of the Mediator complex, which is composed of MED1, MED4, MED6, MED7, MED8, MED9, MED10, MED11, MED12, MED13, MED13L, MED14, MED15, MED16, MED17, MED18, MED19, MED20, MED21, MED22, MED23, MED24, MED25, MED26, MED27, MED29, MED30, MED31, CCNC, CDK8 and CDC2L6/CDK11. The MED12, MED13, CCNC and CDK8 subunits form a distinct module termed the CDK8 module. Mediator containing the CDK8 module is less active than Mediator lacking this module in supporting transcriptional activation. Individual preparations of the Mediator complex lacking one or more distinct subunits have been variously termed ARC, CRSP, DRIP, PC2, SMCC and TRAP.

It localises to the nucleus. Component of the Mediator complex, a coactivator involved in the regulated transcription of nearly all RNA polymerase II-dependent genes. Mediator functions as a bridge to convey information from gene-specific regulatory proteins to the basal RNA polymerase II transcription machinery. Mediator is recruited to promoters by direct interactions with regulatory proteins and serves as a scaffold for the assembly of a functional preinitiation complex with RNA polymerase II and the general transcription factors. The polypeptide is Mediator of RNA polymerase II transcription subunit 27 (Med27) (Mus musculus (Mouse)).